The following is a 193-amino-acid chain: Xanthine phosphoribosyltransferase (193 aa).

2 residues coordinate xanthine: Leu20 and Thr27. Ala128 to Ala132 serves as a coordination point for 5-phospho-alpha-D-ribose 1-diphosphate. Lys156 provides a ligand contact to xanthine.

It belongs to the purine/pyrimidine phosphoribosyltransferase family. Xpt subfamily. In terms of assembly, homodimer.

The protein localises to the cytoplasm. It catalyses the reaction XMP + diphosphate = xanthine + 5-phospho-alpha-D-ribose 1-diphosphate. Its pathway is purine metabolism; XMP biosynthesis via salvage pathway; XMP from xanthine: step 1/1. In terms of biological role, converts the preformed base xanthine, a product of nucleic acid breakdown, to xanthosine 5'-monophosphate (XMP), so it can be reused for RNA or DNA synthesis. This chain is Xanthine phosphoribosyltransferase, found in Streptococcus pyogenes serotype M3 (strain ATCC BAA-595 / MGAS315).